A 455-amino-acid polypeptide reads, in one-letter code: Gamma-aminobutyric acid receptor subunit alpha-1 (455 aa).

The first 27 residues, 1–27, serve as a signal peptide directing secretion; that stretch reads MKKSRGLSDYLWAWTLILSTLSGRSYG. The Extracellular portion of the chain corresponds to 28–252; sequence QPSQDELKDN…FHLKRKIGYF (225 aa). The N-linked (GlcNAc...) asparagine glycan is linked to N37. A 4-aminobutanoate-binding site is contributed by R93. N-linked (GlcNAc...) asparagine glycosylation occurs at N137. Residue T156 coordinates 4-aminobutanoate. The cysteines at positions 165 and 179 are disulfide-linked. A helical transmembrane segment spans residues 253–273; sequence VIQTYLPCIMTVILSQVSFWL. Over 274 to 278 the chain is Cytoplasmic; that stretch reads NRESV. The chain crosses the membrane as a helical span at residues 279–300; the sequence is PARTVFGVTTVLTMTTLSISAR. The Extracellular portion of the chain corresponds to 301–310; that stretch reads NSLPKVAYAT. A helical membrane pass occupies residues 311 to 332; sequence AMDWFIAVCYAFVFSALIEFAT. Residues 333 to 420 lie on the Cytoplasmic side of the membrane; the sequence is VNYFTKRGYA…TFNSVSKIDR (88 aa). The chain crosses the membrane as a helical span at residues 421–440; sequence LSRIAFPLLFGIFNLVYWAT. Residues 441–455 are Extracellular-facing; it reads YLNREPQLKAPTPHQ.

It belongs to the ligand-gated ion channel (TC 1.A.9) family. Gamma-aminobutyric acid receptor (TC 1.A.9.5) subfamily. GABRA1 sub-subfamily. In terms of assembly, heteropentamer, formed by a combination of alpha (GABRA1-6), beta (GABRB1-3), gamma (GABRG1-3), delta (GABRD), epsilon (GABRE), rho (GABRR1-3), pi (GABRP) and theta (GABRQ) subunits, each subunit exhibiting distinct physiological and pharmacological properties. Interacts with UBQLN1. Interacts with TRAK1. Interacts with KIF21B. Identified in a complex of 720 kDa composed of LHFPL4, NLGN2, GABRA1, GABRB2, GABRG2 and GABRB3. Interacts with LHFPL4. Interacts with NLGN2. Interacts with SHISA7; interaction leads to the regulation of GABA(A) receptor trafficking, channel deactivation kinetics and pharmacology. Glycosylated. Expressed in the cerebellum.

The protein localises to the postsynaptic cell membrane. It localises to the cell membrane. It is found in the cytoplasmic vesicle membrane. It catalyses the reaction chloride(in) = chloride(out). With respect to regulation, allosterically activated by benzodiazepines, the neuroanesthetic alphaxalone and pentobarbital. Inhibited by the antagonist bicuculline. Potentiated by histamine. Alpha subunit of the heteropentameric ligand-gated chloride channel gated by Gamma-aminobutyric acid (GABA), a major inhibitory neurotransmitter in the brain. GABA-gated chloride channels, also named GABA(A) receptors (GABAAR), consist of five subunits arranged around a central pore and contain GABA active binding site(s) located at the alpha and beta subunit interface(s). When activated by GABA, GABAARs selectively allow the flow of chloride anions across the cell membrane down their electrochemical gradient. Alpha-1/GABRA1-containing GABAARs are largely synaptic. Chloride influx into the postsynaptic neuron following GABAAR opening decreases the neuron ability to generate a new action potential, thereby reducing nerve transmission. GABAARs containing alpha-1 and beta-2 or -3 subunits exhibit synaptogenic activity; the gamma-2 subunit being necessary but not sufficient to induce rapid synaptic contacts formation. GABAARs function also as histamine receptor where histamine binds at the interface of two neighboring beta subunits and potentiates GABA response. GABAARs containing alpha, beta and epsilon subunits also permit spontaneous chloride channel activity while preserving the structural information required for GABA-gated openings. Alpha-1-mediated plasticity in the orbitofrontal cortex regulates context-dependent action selection. Together with rho subunits, may also control neuronal and glial GABAergic transmission in the cerebellum. The chain is Gamma-aminobutyric acid receptor subunit alpha-1 from Mus musculus (Mouse).